A 227-amino-acid chain; its full sequence is Transmembrane emp24 domain-containing protein 1 (227 aa).

Positions 1–24 are cleaved as a signal peptide; it reads MMAAGAAVALALWLLLPAVGVGEA. The Extracellular portion of the chain corresponds to 25-194; sequence GPPPIQDGEF…LQEDNLERVN (170 aa). In terms of domain architecture, GOLD spans 43-125; that stretch reads KQCFYQSAPA…EKLVFFELIF (83 aa). Residues 145-170 are a coiled coil; that stretch reads EMLDVKMEDIKESIETMRTRLERSIQ. Residues 195 to 215 form a helical membrane-spanning segment; that stretch reads FWSAANVAVLLLVAVLQVCTL. Residues 216-227 are Cytoplasmic-facing; the sequence is KRFFHDKRPVPT. The COPII vesicle coat-binding motif lies at 218-219; sequence FF. The COPI vesicle coat-binding motif lies at 218–227; that stretch reads FFHDKRPVPT.

This sequence belongs to the EMP24/GP25L family. In terms of assembly, homodimer in endoplasmic reticulum, endoplasmic reticulum-Golgi intermediate compartment and cis-Golgi network. Interacts with IL1RL1. Interacts with RNF26; this interaction is important to modulate innate immune signaling through the cGAS-STING pathway. As to expression, widely expressed.

Its subcellular location is the cell membrane. The protein resides in the endoplasmic reticulum membrane. It localises to the golgi apparatus. It is found in the cis-Golgi network membrane. The protein localises to the endoplasmic reticulum-Golgi intermediate compartment membrane. Its function is as follows. Potential role in vesicular protein trafficking, mainly in the early secretory pathway. May act as a cargo receptor at the lumenal side for incorporation of secretory cargo molecules into transport vesicles and may be involved in vesicle coat formation at the cytoplasmic side. Plays a positive role in IL-33-mediated IL-8 and IL-6 production by interacting with interleukin-33 receptor IL1RL1. Plays also a role in the modulation of innate immune signaling through the cGAS-STING pathway by interacting with RNF26. This chain is Transmembrane emp24 domain-containing protein 1 (Tmed1), found in Mus musculus (Mouse).